The chain runs to 178 residues: Ribosomal RNA small subunit methyltransferase G (178 aa).

S-adenosyl-L-methionine-binding positions include glycine 54, leucine 59, 105 to 106 (LE), and arginine 120.

Belongs to the methyltransferase superfamily. RNA methyltransferase RsmG family.

It localises to the cytoplasm. It catalyses the reaction guanosine(527) in 16S rRNA + S-adenosyl-L-methionine = N(7)-methylguanosine(527) in 16S rRNA + S-adenosyl-L-homocysteine. Its function is as follows. Specifically methylates the N7 position of guanine in position 527 of 16S rRNA. This is Ribosomal RNA small subunit methyltransferase G from Helicobacter acinonychis (strain Sheeba).